The sequence spans 344 residues: Polycomb group RING finger protein 2 (344 aa).

Residues 18–57 form an RING-type zinc finger; it reads CALCGGYFIDATTIVECLHSFCKTCIVRYLETNKYCPMCD. Glycyl lysine isopeptide (Lys-Gly) (interchain with G-Cter in SUMO2) cross-links involve residues Lys-51 and Lys-88. The short motif at 81–95 is the Nuclear localization signal element; that stretch reads KLVPGLFKDEMKRRR. Residues 240-253 are compositionally biased toward polar residues; it reads TVPTPSEGTNTSGA. The segment at 240 to 344 is disordered; it reads TVPTPSEGTN…VNGAPVPPLT (105 aa). Residues 263–313 are compositionally biased toward low complexity; the sequence is APSPATLPATSSSLPSPATPSHGSPSSHGPPATHPTSPTPPSTASGATTAA. The segment covering 314–328 has biased composition (polar residues); the sequence is NGGSLNCLQTPSSTS. Phosphothreonine is present on Thr-344.

Exists as both a monomer and homodimer. Component of a PRC1-like complex. Interacts with CBX8, RING1 and RNF2. Interacts with CBX7. Interacts with PHC2. In terms of processing, phosphorylated. Homodimer formation is regulated by phosphorylation with only unphosphorylated proteins forming homodimers. Detected in all tissues examined with high expression found in placenta lung and kidney and low expression, in liver, pancreas and skeletal muscle.

It localises to the nucleus. In terms of biological role, transcriptional repressor. Binds specifically to the DNA sequence 5'-GACTNGACT-3'. Has tumor suppressor activity. May play a role in control of cell proliferation and/or neural cell development. Regulates proliferation of early T progenitor cells by maintaining expression of HES1. Also plays a role in antero-posterior specification of the axial skeleton and negative regulation of the self-renewal activity of hematopoietic stem cells. Component of a Polycomb group (PcG) multiprotein PRC1-like complex, a complex class required to maintain the transcriptionally repressive state of many genes, including Hox genes, throughout development. PcG PRC1 complex acts via chromatin remodeling and modification of histones; it mediates monoubiquitination of histone H2A 'Lys-119', rendering chromatin heritably changed in its expressibility. Within the PRC1-like complex, regulates RNF2 ubiquitin ligase activity. The protein is Polycomb group RING finger protein 2 (PCGF2) of Homo sapiens (Human).